A 357-amino-acid polypeptide reads, in one-letter code: Phosphoribosylformylglycinamidine cyclo-ligase (357 aa).

This sequence belongs to the AIR synthase family.

It is found in the cytoplasm. It carries out the reaction 2-formamido-N(1)-(5-O-phospho-beta-D-ribosyl)acetamidine + ATP = 5-amino-1-(5-phospho-beta-D-ribosyl)imidazole + ADP + phosphate + H(+). Its pathway is purine metabolism; IMP biosynthesis via de novo pathway; 5-amino-1-(5-phospho-D-ribosyl)imidazole from N(2)-formyl-N(1)-(5-phospho-D-ribosyl)glycinamide: step 2/2. This is Phosphoribosylformylglycinamidine cyclo-ligase from Rhodopseudomonas palustris (strain ATCC BAA-98 / CGA009).